Consider the following 159-residue polypeptide: MSRKKRIYKKNTNILQEPVFNDNVLLKFINCLMFDGKKSVAEKLVYNSFREIRKETSVDPIIVFNDAIRNTTPVVQVKSIRIAGSNYQVPMEIPTHRQIMLAIKWIIESARKRTEKTMVERLSKELIDAYKNSGKAIDKKISMHKMAESNRAYAHYRWQ.

Belongs to the universal ribosomal protein uS7 family. As to quaternary structure, part of the small ribosomal subunit.

Its subcellular location is the mitochondrion. In terms of biological role, one of the primary rRNA binding proteins, it binds directly to the small rRNA where it nucleates assembly of the head domain of the small subunit. The chain is Small ribosomal subunit protein uS7m (RPS7) from Reclinomonas americana.